Here is a 121-residue protein sequence, read N- to C-terminus: Large ribosomal subunit protein bL12 (121 aa).

It belongs to the bacterial ribosomal protein bL12 family. Homodimer. Part of the ribosomal stalk of the 50S ribosomal subunit. Forms a multimeric L10(L12)X complex, where L10 forms an elongated spine to which 2 to 4 L12 dimers bind in a sequential fashion. Binds GTP-bound translation factors.

In terms of biological role, forms part of the ribosomal stalk which helps the ribosome interact with GTP-bound translation factors. Is thus essential for accurate translation. This chain is Large ribosomal subunit protein bL12, found in Aliivibrio salmonicida (strain LFI1238) (Vibrio salmonicida (strain LFI1238)).